A 331-amino-acid polypeptide reads, in one-letter code: Fructose-1,6-bisphosphatase class 1 2 (331 aa).

Glu-80, Asp-98, Leu-100, and Asp-101 together coordinate Mg(2+). Substrate-binding positions include 101–104 (DGSS) and Asn-189. Glu-261 contributes to the Mg(2+) binding site.

Belongs to the FBPase class 1 family. Homotetramer. It depends on Mg(2+) as a cofactor.

Its subcellular location is the cytoplasm. The enzyme catalyses beta-D-fructose 1,6-bisphosphate + H2O = beta-D-fructose 6-phosphate + phosphate. It functions in the pathway carbohydrate biosynthesis; Calvin cycle. The protein is Fructose-1,6-bisphosphatase class 1 2 of Cereibacter sphaeroides (strain ATCC 17023 / DSM 158 / JCM 6121 / CCUG 31486 / LMG 2827 / NBRC 12203 / NCIMB 8253 / ATH 2.4.1.) (Rhodobacter sphaeroides).